A 249-amino-acid chain; its full sequence is Probable transcriptional regulatory protein A1S_1496 (249 aa).

The protein belongs to the TACO1 family.

The protein localises to the cytoplasm. The protein is Probable transcriptional regulatory protein A1S_1496 of Acinetobacter baumannii (strain ATCC 17978 / DSM 105126 / CIP 53.77 / LMG 1025 / NCDC KC755 / 5377).